The sequence spans 310 residues: Prephenate dehydratase (310 aa).

Residues 3–190 enclose the Prephenate dehydratase domain; the sequence is RIAYLGPEGT…ARTRFVLVGL (188 aa). Positions 204–281 constitute an ACT domain; the sequence is AVVLRLVNEP…VDVRYLGSWP (78 aa).

Homodimer.

It catalyses the reaction prephenate + H(+) = 3-phenylpyruvate + CO2 + H2O. It functions in the pathway amino-acid biosynthesis; L-phenylalanine biosynthesis; phenylpyruvate from prephenate: step 1/1. This Mycolicibacterium smegmatis (strain ATCC 700084 / mc(2)155) (Mycobacterium smegmatis) protein is Prephenate dehydratase (pheA).